A 662-amino-acid chain; its full sequence is MSENPVKRPGKDGSRNKFKPVQEEGGTPGWFRSKGESPQGKFPGFLLFLMAGLLMLFVFLRFFSGTDAPEITYNEYKSVLSRALVTEVTVKTYEDKSAILSGKLNAPAQLQLIDKTTLQTNRFAVRVPSFTLEQADMLTEKGVRLKVEKGSSDLNTFLALFAPWIIFAALYFFLFRRMSGQNGAQAKNIFSFGKSRAKMVSEFEVKTTFKDVAGVDEAIEELQETVEFLTNPEKFQKIGGKIPKGVLLLGPPGTGKTLLAKAIAGEAKVPFFSISGADFVEMFVGVGAARVRDLFEQAKKNAPCIIFIDEIDAVGRSRGAGLGGGHDEREQTLNQLLVEMDGFTTNENVILIAATNRPDVLDSALLRPGRFDRQITIDKPDIRGREAILKIHTRNTPLDGDVDITVLAKSSPGFSGADLANLVNEAALLAARHEQVLITAVNFEQARDKILMGPERRSMFISDEQKKLTAYHEAGHVLVSIHTKGSDPIHKVTIIPRGRSLGLTAYLPLEDRYTHNREYLLAMITYALGGRVAEELVFQECSTGAANDIEKATDIARRMVRQWGMSESLGPINYGDSHKEVFLGKDYSHIREYSEETALQIDVEVRNIIMGCMENAKTVLSEQLAVLHRLAGILIEKESLNAREIQEITGPGQGALPNPVTA.

A compositionally biased stretch (basic and acidic residues) spans 1–15 (MSENPVKRPGKDGSR). The segment at 1–35 (MSENPVKRPGKDGSRNKFKPVQEEGGTPGWFRSKG) is disordered. At 1-39 (MSENPVKRPGKDGSRNKFKPVQEEGGTPGWFRSKGESPQ) the chain is on the cytoplasmic side. A helical membrane pass occupies residues 40 to 60 (GKFPGFLLFLMAGLLMLFVFL). The Periplasmic segment spans residues 61–154 (RFFSGTDAPE…LKVEKGSSDL (94 aa)). A helical membrane pass occupies residues 155 to 175 (NTFLALFAPWIIFAALYFFLF). The Cytoplasmic portion of the chain corresponds to 176–662 (RRMSGQNGAQ…QGALPNPVTA (487 aa)). 250 to 257 (GPPGTGKT) contacts ATP. A Zn(2+)-binding site is contributed by histidine 472. Glutamate 473 is a catalytic residue. Histidine 476 and aspartate 548 together coordinate Zn(2+).

It in the central section; belongs to the AAA ATPase family. This sequence in the C-terminal section; belongs to the peptidase M41 family. Homohexamer. Requires Zn(2+) as cofactor.

Its subcellular location is the cell inner membrane. Its function is as follows. Acts as a processive, ATP-dependent zinc metallopeptidase for both cytoplasmic and membrane proteins. Plays a role in the quality control of integral membrane proteins. The chain is ATP-dependent zinc metalloprotease FtsH from Pelodictyon phaeoclathratiforme (strain DSM 5477 / BU-1).